A 94-amino-acid polypeptide reads, in one-letter code: Large ribosomal subunit protein uL23 (94 aa).

Belongs to the universal ribosomal protein uL23 family. In terms of assembly, part of the 50S ribosomal subunit. Contacts protein L29, and trigger factor when it is bound to the ribosome.

Functionally, one of the early assembly proteins it binds 23S rRNA. One of the proteins that surrounds the polypeptide exit tunnel on the outside of the ribosome. Forms the main docking site for trigger factor binding to the ribosome. The sequence is that of Large ribosomal subunit protein uL23 from Latilactobacillus sakei subsp. sakei (strain 23K) (Lactobacillus sakei subsp. sakei).